Here is a 377-residue protein sequence, read N- to C-terminus: Putrescine transport ATP-binding protein PotG (377 aa).

The ABC transporter domain maps to 20–250; the sequence is LEIRNLTKSY…PTTRYSAEFI (231 aa). Residue 52–59 coordinates ATP; the sequence is GASGCGKS.

This sequence belongs to the ABC transporter superfamily. The complex is composed of two ATP-binding proteins (PotG), two transmembrane proteins (PotH and PotI) and a solute-binding protein (PotF).

The protein resides in the cell inner membrane. The enzyme catalyses putrescine(out) + ATP + H2O = putrescine(in) + ADP + phosphate + H(+). Its activity is regulated as follows. Transport is feedback inhibited by intracellular polyamines. Its function is as follows. Part of the ABC transporter complex PotFGHI involved in putrescine uptake. Responsible for energy coupling to the transport system. Imports putrescine for maintenance of the optimal concentration of polyamines necessary for cell growth in the presence of glucose. The sequence is that of Putrescine transport ATP-binding protein PotG from Escherichia coli (strain K12).